The chain runs to 147 residues: Globin (147 aa).

Residues 1 to 147 (GLSAEQKTAL…LLGVLIENHQ (147 aa)) enclose the Globin domain. The heme b site is built by His-66 and His-98.

Belongs to the globin family. As to quaternary structure, homodimer.

The protein is Globin of Tritia mutabilis (Sea snail).